Reading from the N-terminus, the 265-residue chain is uncharacterized protein (265 aa).

Disordered stretches follow at residues 21-53 (TLTHDEQGPGVEPGPCSRGSSIDGLLPSLLGPH) and 78-133 (HAPS…SSVS). A compositionally biased stretch (acidic residues) spans 90–101 (DDDDDDEDDDDS). The segment covering 114–123 (SSSSSSSPRV) has biased composition (low complexity). 137–144 (AILHQGKS) is an ATP binding site.

This is an uncharacterized protein from Saccharomyces cerevisiae (strain ATCC 204508 / S288c) (Baker's yeast).